Reading from the N-terminus, the 625-residue chain is Voltage-gated potassium channel KCNC4 (625 aa).

Disordered stretches follow at residues methionine 1–cysteine 24 and leucine 65–serine 86. The segment at methionine 1–glutamate 28 is inactivation gate. Topologically, residues methionine 1–arginine 227 are cytoplasmic. 4 positions are modified to phosphoserine: serine 8, serine 9, serine 15, and serine 21. Over residues aspartate 77–serine 86 the composition is skewed to gly residues. The Zn(2+) site is built by histidine 117, cysteine 123, cysteine 144, and cysteine 145. A helical membrane pass occupies residues valine 228–threonine 248. 2 N-linked (GlcNAc...) asparagine glycosylation sites follow: asparagine 257 and asparagine 266. The chain crosses the membrane as a helical span at residues glutamate 279–valine 299. At arginine 300 to asparagine 313 the chain is on the cytoplasmic side. Residues leucine 314 to glycine 334 traverse the membrane as a helical segment. Residues phenylalanine 346–phenylalanine 365 form a helical; Voltage-sensor membrane-spanning segment. Residues valine 366–glutamate 381 lie on the Cytoplasmic side of the membrane. A helical membrane pass occupies residues phenylalanine 382–tyrosine 402. K(+) is bound by residues threonine 437, leucine 438, glycine 439, and tyrosine 440. Residues threonine 437–aspartate 442 carry the Selectivity filter motif. A helical transmembrane segment spans residues valine 453–valine 473. The Cytoplasmic portion of the chain corresponds to asparagine 474 to leucine 625. The segment at proline 490–arginine 581 is disordered. Residues alanine 528–glutamine 543 show a composition bias toward basic and acidic residues.

This sequence belongs to the potassium channel family. C (Shaw) (TC 1.A.1.2) subfamily. Kv3.4/KCNC4 sub-subfamily. As to quaternary structure, homotetramer. Heterotetramer of potassium channel proteins. Post-translationally, phosphorylation of serine residues in the inactivation gate inhibits rapid channel closure.

The protein localises to the membrane. The catalysed reaction is K(+)(in) = K(+)(out). Voltage-gated potassium channel that opens in response to the voltage difference across the membrane, forming a potassium-selective channel through which potassium ions pass in accordance with their electrochemical gradient. The channel displays rapid activation and inactivation kinetics. This chain is Voltage-gated potassium channel KCNC4, found in Rattus norvegicus (Rat).